Consider the following 355-residue polypeptide: DNA polymerase IV (355 aa).

A UmuC domain is found at 7–188 (IIHIDMDCFY…LPVRKLFGVG (182 aa)). Mg(2+) contacts are provided by Asp-11 and Asp-106. Glu-107 is a catalytic residue.

This sequence belongs to the DNA polymerase type-Y family. Monomer. Mg(2+) serves as cofactor.

The protein resides in the cytoplasm. The catalysed reaction is DNA(n) + a 2'-deoxyribonucleoside 5'-triphosphate = DNA(n+1) + diphosphate. Poorly processive, error-prone DNA polymerase involved in untargeted mutagenesis. Copies undamaged DNA at stalled replication forks, which arise in vivo from mismatched or misaligned primer ends. These misaligned primers can be extended by PolIV. Exhibits no 3'-5' exonuclease (proofreading) activity. May be involved in translesional synthesis, in conjunction with the beta clamp from PolIII. The sequence is that of DNA polymerase IV from Legionella pneumophila (strain Paris).